Reading from the N-terminus, the 20-residue chain is Outer membrane protein 40Va (20 aa).

The protein belongs to the Gram-negative porin family. As to quaternary structure, homotrimer.

The protein resides in the cell outer membrane. Functionally, forms pores that allow passive diffusion of small molecules across the outer membrane. This Vibrio alginolyticus protein is Outer membrane protein 40Va.